Here is a 227-residue protein sequence, read N- to C-terminus: Casparian strip membrane protein 2 (227 aa).

At 1 to 59 (MSSTSEATVIHMDGAAGKTPATAVPPPPPPAPTAPVQQQRKAGGVPFLLRSGAEGFRRC) the chain is on the cytoplasmic side. Residues 17 to 37 (GKTPATAVPPPPPPAPTAPVQ) are disordered. A compositionally biased stretch (pro residues) spans 23–33 (AVPPPPPPAPT). Residues 60–80 (MALLDLLLRVAAMGPTLAAAI) form a helical membrane-spanning segment. Residues 81–107 (STGTSDETLSVFTHYFQFRARFDDFSA) are Extracellular-facing. The helical transmembrane segment at 108-128 (FTFFMVANAVAAGYLLMSLPF) threads the bilayer. The Cytoplasmic portion of the chain corresponds to 129-149 (SAFGVIRPKATSVRLLLLICD). Residues 150–170 (TIMVVLVTAAASAAAAIVYVA) form a helical membrane-spanning segment. Over 171-197 (HEGNRRANWVPICMQFHGFCKRTSGAV) the chain is Extracellular. Residues 198 to 218 (VASFLAVLIFILLVFLGACAI) traverse the membrane as a helical segment. The Cytoplasmic segment spans residues 219–227 (RRRHTTTKH).

It belongs to the Casparian strip membrane proteins (CASP) family. Homodimer and heterodimers.

It localises to the cell membrane. In terms of biological role, regulates membrane-cell wall junctions and localized cell wall deposition. Required for establishment of the Casparian strip membrane domain (CSD) and the subsequent formation of Casparian strips, a cell wall modification of the root endodermis that determines an apoplastic barrier between the intraorganismal apoplasm and the extraorganismal apoplasm and prevents lateral diffusion. The sequence is that of Casparian strip membrane protein 2 from Brachypodium distachyon (Purple false brome).